The sequence spans 132 residues: S-protein homolog 19 (132 aa).

An N-terminal signal peptide occupies residues 1 to 26 (MSGSLAFHIIMSVTFMVFFFGGLCEA). The N-linked (GlcNAc...) asparagine glycan is linked to N87.

Belongs to the plant self-incompatibility (S1) protein family.

The protein localises to the secreted. The chain is S-protein homolog 19 from Arabidopsis thaliana (Mouse-ear cress).